The chain runs to 101 residues: Protamine-3 (101 aa).

Residues 1–101 (MGSRCAKLST…PSPEPKQTHS (101 aa)) form a disordered region. The segment covering 45–67 (EGEEEEEDEEEEEEEEEEEEEEQ) has biased composition (acidic residues). Ser-93 is modified (phosphoserine).

It belongs to the protamine P3 family. Testis.

It localises to the nucleus. Its subcellular location is the chromosome. In terms of biological role, protamines substitute for histones in the chromatin of sperm during the haploid phase of spermatogenesis. They compact sperm DNA into a highly condensed, stable and inactive complex. This chain is Protamine-3 (Prm3), found in Mus musculus (Mouse).